The primary structure comprises 595 residues: MTVDSALRSPMMHSPSTKDVKALRFIEEMTRNVDFVQKKVIREILSRNSDTEYLKRFGLKGFTDRKTFKTKVPVVIYDDLKPEIQRIANGDRSMILSSYPITEFLTSSGTSAGERKLMPTIDEDMDRRQLLYSLLMPVMNLYVPGLDKGKALYFLFVKTESKTPGGLPARPVLTSYYKSEQFKRRPNDPYNVYTSPNEAILCPDSSQSMYTQMLCGLLMRHEVLRLGAVFASGLLRAIGFLQTNWKELADDISTGTLSSRISDPAIKESMSKILTKPDQELADFITSVCGQDNSWEGIITKIWPNTKYLDVIVTGAMAQYIPMLEYYSGGLPMACTMYASSESYFGINLKPMCKPSEVSYTIMPNMAYFEFLPHHEVPTEKSELVELADVEVGKEYELVITTYAGLNRYRVGDILQVTGFYNSAPQFKFVRRKNVLLSIESDKTDEAELQSAVENASLLLGEQGTRVIEYTSYAETKTIPGHYVIYWELLVKDQTNPPNDEVMARCCLEMEESLNSVYRQSRVADKSIGPLEIRVVKNGTFEELMDYAISRGASINQYKVPRCVSFTPIMELLDSRVVSTHFSPALPHWSPERRR.

Belongs to the IAA-amido conjugating enzyme family.

Its function is as follows. Catalyzes the synthesis of indole-3-acetic acid (IAA)-amino acid conjugates, providing a mechanism for the plant to cope with the presence of excess auxin. Strongly reactive with Glu, Gln, Trp, Asp, Ala, Leu, Phe, Gly, Tyr, Met, Ile and Val. Little or no product formation with His, Ser, Thr, Arg, Lys, or Cys. Also active on pyruvic and butyric acid analogs of IAA, PAA and the synthetic auxin naphthaleneacetic acid (NAA). The two chlorinated synthetic auxin herbicides 2,4-D and 3,6-dichloro-o-anisic acid (dicamba) cannot be used as substrates. This is Indole-3-acetic acid-amido synthetase GH3.3 (GH3.3) from Arabidopsis thaliana (Mouse-ear cress).